Consider the following 179-residue polypeptide: uncharacterized protein (179 aa).

The tract at residues 160 to 179 (QPIEPNGTQPATETKTPVGV) is disordered. Positions 165–179 (NGTQPATETKTPVGV) are enriched in polar residues.

It belongs to the Dps family.

This is an uncharacterized protein from Anabaena variabilis.